The primary structure comprises 595 residues: Apolipoprotein N-acyltransferase 2 (595 aa).

Transmembrane regions (helical) follow at residues 30–50 (FLAFAPVSLTHFVWIAPFGFF), 63–83 (LFFHGLLIGVVFYAISFHWII), 95–115 (VVAILILLFAGLLFGLKFPIF), 167–187 (AEITGVYGISFLVFIVSYTLF), and 210–230 (FITLPALLLLTFIVSGIFLFK). The region spanning 241–555 (LNVLIVQPDA…AEALSETIDV (315 aa)) is the CN hydrolase domain. Catalysis depends on E293, which acts as the Proton acceptor. The active site involves K372. The active-site Nucleophile is the C463. The chain crosses the membrane as a helical span at residues 569–589 (LIPWLMLFLTGIYYLNLLIGI).

The protein belongs to the CN hydrolase family. Apolipoprotein N-acyltransferase subfamily.

It localises to the cell inner membrane. It catalyses the reaction N-terminal S-1,2-diacyl-sn-glyceryl-L-cysteinyl-[lipoprotein] + a glycerophospholipid = N-acyl-S-1,2-diacyl-sn-glyceryl-L-cysteinyl-[lipoprotein] + a 2-acyl-sn-glycero-3-phospholipid + H(+). It participates in protein modification; lipoprotein biosynthesis (N-acyl transfer). Catalyzes the phospholipid dependent N-acylation of the N-terminal cysteine of apolipoprotein, the last step in lipoprotein maturation. The sequence is that of Apolipoprotein N-acyltransferase 2 from Leptospira interrogans serogroup Icterohaemorrhagiae serovar Lai (strain 56601).